The chain runs to 103 residues: Protein S100-A16 (103 aa).

Positions 12-47 (VVVLVENFYKYVSKHSLVKNKISKSSFRKMLQKELN) constitute an EF-hand 1; degenerate domain. Positions 54 to 89 (GNRKAADKLIQNLDANHDGRISFDEYWTLIGGITSP) constitute an EF-hand 2 domain. Residues aspartate 67, asparagine 69, aspartate 71, arginine 73, and glutamate 78 each coordinate Ca(2+).

Belongs to the S-100 family. As to quaternary structure, homodimer. Interacts with TP53.

Its subcellular location is the nucleus. The protein localises to the nucleolus. The protein resides in the cytoplasm. In terms of biological role, calcium-binding protein. Binds one calcium ion per monomer. Can promote differentiation of adipocytes (in vitro). Overexpression in preadipocytes increases their proliferation, enhances adipogenesis and reduces insulin-stimulated glucose uptake. This chain is Protein S100-A16 (S100A16), found in Bos taurus (Bovine).